Reading from the N-terminus, the 210-residue chain is MAKNAMLCLLILRVVLALAFATNKKGDEEPENHSTGIFGKVGRVVTVALAMSSRLGGADATRGGGAVYGGNLKSNQLPNNNWMAPPPPMAIRSAKVYDSKHSPAEYLKKFAQDFRRKTGMHSQRHHEETTLEQEKRVAGAGPDPIHHQDTTLEQEKRAVPAGPDPKHHEETTLEQEKRAVPAGPDPKHHEDTTLEQEKRGAPAGPDPIHH.

Residues 1 to 21 (MAKNAMLCLLILRVVLALAFA) form the signal peptide. Residues 21–83 (ATNKKGDEEP…SNQLPNNNWM (63 aa)) are required for secretion from the host cytoplasm to the host apoplasm. N-linked (GlcNAc...) asparagine glycosylation occurs at Asn32. A disordered region spans residues 116 to 210 (RKTGMHSQRH…APAGPDPIHH (95 aa)). 2 stretches are compositionally biased toward basic and acidic residues: residues 125-137 (HHEE…EKRV) and 144-200 (PIHH…EKRG). One copy of the A-1 repeat lies at 127–135 (EETTLEQEK). The interval 127–198 (EETTLEQEKR…HEDTTLEQEK (72 aa)) is 4 X approximate repeat A. The stretch at 136–147 (RVAGAGPDPIHH) is one CLE-1 repeat. Residues 136-210 (RVAGAGPDPI…APAGPDPIHH (75 aa)) are 4 X approximate repeat CLE. The A-2 repeat unit spans residues 148–156 (QDTTLEQEK). A CLE-2 repeat occupies 157 to 168 (RAVPAGPDPKHH). The stretch at 169-177 (EETTLEQEK) is one A-3 repeat. The CLE-3 repeat unit spans residues 178–189 (RAVPAGPDPKHH). Residues 190–198 (EDTTLEQEK) form an A-4 repeat. The CLE-4 repeat unit spans residues 199–210 (RGAPAGPDPIHH).

Belongs to the CLV3/ESR signal peptide family. In terms of tissue distribution, highly expressed exclusively within the dorsal esophageal gland cell during syncytium formation in host plants.

It localises to the secreted. The protein resides in the host cytoplasm. The protein localises to the host extracellular space. Its subcellular location is the extracellular space. It is found in the apoplast. Functionally, mimics host plant CLE extracellular signal peptides that regulate cell fate. May play a role in the differentiation or division of feeding cells (syncytia) induced in plant roots during infection. The chain is CLAVATA3/ESR (CLE)-related protein 4A-3 (CLE-4A-3) from Globodera rostochiensis (Golden nematode worm).